The chain runs to 330 residues: Type I restriction enzyme MpnII specificity subunit (330 aa).

It belongs to the type-I restriction system S methylase family. The methyltransferase is composed of M and S polypeptides.

Its function is as follows. The specificity (S) subunit of a type I restriction enzyme; this subunit dictates DNA sequence specificity. The M and S subunits together form a methyltransferase (MTase) that probably methylates A-2 on the top strand and A-3 on the bottom strand of the sequence 5'-GAN(7)TAY-3'. As the bacterial DNA is methylated on this sequence and this is the only type I methylase in the genome, it is probably responsible for all of the methylation on this site in the genome. The R subunit has multiple frameshifts and is probably not expressed in this bacteria. The sequence is that of Type I restriction enzyme MpnII specificity subunit from Mycoplasma pneumoniae (strain ATCC 29342 / M129 / Subtype 1) (Mycoplasmoides pneumoniae).